A 246-amino-acid chain; its full sequence is Bis(5'-nucleosyl)-tetraphosphatase PrpE [asymmetrical] (246 aa).

This sequence belongs to the PrpE family. Requires Ni(2+) as cofactor.

It carries out the reaction P(1),P(4)-bis(5'-guanosyl) tetraphosphate + H2O = GMP + GTP + 2 H(+). Functionally, asymmetrically hydrolyzes Ap4p to yield AMP and ATP. The sequence is that of Bis(5'-nucleosyl)-tetraphosphatase PrpE [asymmetrical] from Bacillus thuringiensis subsp. konkukian (strain 97-27).